The primary structure comprises 184 residues: MSATVRILGIDPGSRVTGFGIIDVRGRDHFYVASGCIKTPADEPLFTADRIAVIVRHIGEVVAVYKPQQAAVEQVFVNVNPASTLMLGQARGAALAALVSHKLPVSFTEYTALQVKQAVVGKGKAAKEQVQHMVVQMLGLSGTPQADAADGLAVALTHALRNHGLAAFTKLNPSGMQVKRGRFQ.

Residues Asp-11, Glu-73, and Asp-147 contribute to the active site. Positions 11, 73, and 147 each coordinate Mg(2+).

This sequence belongs to the RuvC family. In terms of assembly, homodimer which binds Holliday junction (HJ) DNA. The HJ becomes 2-fold symmetrical on binding to RuvC with unstacked arms; it has a different conformation from HJ DNA in complex with RuvA. In the full resolvosome a probable DNA-RuvA(4)-RuvB(12)-RuvC(2) complex forms which resolves the HJ. Mg(2+) serves as cofactor.

It is found in the cytoplasm. It catalyses the reaction Endonucleolytic cleavage at a junction such as a reciprocal single-stranded crossover between two homologous DNA duplexes (Holliday junction).. Functionally, the RuvA-RuvB-RuvC complex processes Holliday junction (HJ) DNA during genetic recombination and DNA repair. Endonuclease that resolves HJ intermediates. Cleaves cruciform DNA by making single-stranded nicks across the HJ at symmetrical positions within the homologous arms, yielding a 5'-phosphate and a 3'-hydroxyl group; requires a central core of homology in the junction. The consensus cleavage sequence is 5'-(A/T)TT(C/G)-3'. Cleavage occurs on the 3'-side of the TT dinucleotide at the point of strand exchange. HJ branch migration catalyzed by RuvA-RuvB allows RuvC to scan DNA until it finds its consensus sequence, where it cleaves and resolves the cruciform DNA. The sequence is that of Crossover junction endodeoxyribonuclease RuvC from Neisseria gonorrhoeae (strain ATCC 700825 / FA 1090).